A 546-amino-acid chain; its full sequence is MRGELPNKHHSYTFFVFLFFFLILFPDLSISVNTLSATESLTISSNKTIVSPGGVFELGFFRILGDSWYLGIWYKKISQRTYVWVANRDTPLSNPIGILKISNANLVILDNSDTHVWSTNLTGAVRSSVVAELLDNGNFVLRGSKINESDEFLWQSFDFPTDTLLPQMKLGRDHKRGLNRFVTSWKSSFDPSSGSFMFKLETLGLPEFFGFTSFLEVYRSGPWDGLRFSGILEMQQWDDIIYNFTENREEVAYTFRVTDHNSYSRLTINTVGRLEGFTWEPTQQEWNMFWFMPKDTCDLYGICGPYAYCDMSTSPTCNCIKGFQPLSPQDWASGDVTGRCRRKTQLTCGEDRFFRLMNMKIPATTAAIVDKRIGLKECEEKCKTHCNCTAYANSDIRNGGSGCIIWIGEFRDIRNYAADGQDLFVRLAAAEFGERRTIRGKIIGLIIGISLMLVLSFIIYCFWKKKQKRARATAAPIGYRDRIQELIITNGVVMSSGRRLLGEEEDLELPLTEFETVVMATENFSDSNILGRGGFGIVYKGRLLDG.

The N-terminal stretch at 1-31 (MRGELPNKHHSYTFFVFLFFFLILFPDLSIS) is a signal peptide. Residues 32 to 441 (VNTLSATESL…FGERRTIRGK (410 aa)) are Extracellular-facing. Residues 34 to 154 (TLSATESLTI…KINESDEFLW (121 aa)) enclose the Bulb-type lectin domain. N-linked (GlcNAc...) asparagine glycosylation is found at N46, N120, N147, and N243. An EGF-like; atypical domain is found at 293-329 (PKDTCDLYGICGPYAYCDMSTSPTCNCIKGFQPLSPQ). 4 disulfides stabilise this stretch: C297/C309, C303/C317, C378/C403, and C382/C388. Positions 348-428 (CGEDRFFRLM…DGQDLFVRLA (81 aa)) constitute a PAN domain. N387 carries an N-linked (GlcNAc...) asparagine glycan. Residues 442 to 462 (IIGLIIGISLMLVLSFIIYCF) traverse the membrane as a helical segment. Residues 463–546 (WKKKQKRARA…IVYKGRLLDG (84 aa)) are Cytoplasmic-facing. One can recognise a Protein kinase domain in the interval 524-546 (FSDSNILGRGGFGIVYKGRLLDG). 530–538 (LGRGGFGIV) contacts ATP.

The protein belongs to the protein kinase superfamily. Ser/Thr protein kinase family.

The protein resides in the cell membrane. In terms of biological role, truncated and inactivated form of SRK, the female specificity determinant of self-incompatibility when active. Most A.thaliana cultivars contain such an inactive form and thus, are self-fertiles. This chain is Putative inactive G-type lectin S-receptor-like serine/threonine-protein kinase SRK (PSEUDOSRKA), found in Arabidopsis thaliana (Mouse-ear cress).